Reading from the N-terminus, the 367-residue chain is Leucine dehydrogenase (367 aa).

The active site involves K80. 180–186 (GVGNVAY) provides a ligand contact to NAD(+).

Belongs to the Glu/Leu/Phe/Val dehydrogenases family. Homohexamer.

The catalysed reaction is L-leucine + NAD(+) + H2O = 4-methyl-2-oxopentanoate + NH4(+) + NADH + H(+). It functions in the pathway amino-acid degradation; L-leucine degradation; 4-methyl-2-oxopentanoate from L-leucine (dehydrogenase route): step 1/1. Its function is as follows. Catalyzes the reversible deamination of L-leucine to 4-methyl-2-oxopentanoate. The protein is Leucine dehydrogenase (ldh) of Geobacillus stearothermophilus (Bacillus stearothermophilus).